The chain runs to 314 residues: 2,3-dihydroxyphenylpropionate/2,3-dihydroxicinnamic acid 1,2-dioxygenase (314 aa).

The active-site Proton donor is the His-115. His-179 functions as the Proton acceptor in the catalytic mechanism.

This sequence belongs to the LigB/MhpB extradiol dioxygenase family. Homotetramer. Fe(2+) serves as cofactor.

It catalyses the reaction 3-(2,3-dihydroxyphenyl)propanoate + O2 = (2Z,4E)-2-hydroxy-6-oxonona-2,4-dienedioate + H(+). It carries out the reaction (2E)-3-(2,3-dihydroxyphenyl)prop-2-enoate + O2 = (2Z,4E,7E)-2-hydroxy-6-oxonona-2,4,7-trienedioate + H(+). Its pathway is aromatic compound metabolism; 3-phenylpropanoate degradation. Catalyzes the non-heme iron(II)-dependent oxidative cleavage of 2,3-dihydroxyphenylpropionic acid and 2,3-dihydroxicinnamic acid into 2-hydroxy-6-ketononadienedioate and 2-hydroxy-6-ketononatrienedioate, respectively. This chain is 2,3-dihydroxyphenylpropionate/2,3-dihydroxicinnamic acid 1,2-dioxygenase, found in Rhodococcus globerulus.